A 349-amino-acid polypeptide reads, in one-letter code: Phenylalanine--tRNA ligase alpha subunit (349 aa).

Residue Glu-258 coordinates Mg(2+).

It belongs to the class-II aminoacyl-tRNA synthetase family. Phe-tRNA synthetase alpha subunit type 1 subfamily. Tetramer of two alpha and two beta subunits. Mg(2+) is required as a cofactor.

It localises to the cytoplasm. It carries out the reaction tRNA(Phe) + L-phenylalanine + ATP = L-phenylalanyl-tRNA(Phe) + AMP + diphosphate + H(+). This is Phenylalanine--tRNA ligase alpha subunit from Rickettsia bellii (strain RML369-C).